A 156-amino-acid polypeptide reads, in one-letter code: S-ribosylhomocysteine lyase (156 aa).

H54, H58, and C126 together coordinate Fe cation.

It belongs to the LuxS family. Homodimer. Fe cation serves as cofactor.

The catalysed reaction is S-(5-deoxy-D-ribos-5-yl)-L-homocysteine = (S)-4,5-dihydroxypentane-2,3-dione + L-homocysteine. Functionally, involved in the synthesis of autoinducer 2 (AI-2) which is secreted by bacteria and is used to communicate both the cell density and the metabolic potential of the environment. The regulation of gene expression in response to changes in cell density is called quorum sensing. Catalyzes the transformation of S-ribosylhomocysteine (RHC) to homocysteine (HC) and 4,5-dihydroxy-2,3-pentadione (DPD). The polypeptide is S-ribosylhomocysteine lyase (Shouchella clausii (strain KSM-K16) (Alkalihalobacillus clausii)).